Consider the following 84-residue polypeptide: Sulfur carrier protein TusA (84 aa).

The active-site Cysteine persulfide intermediate is cysteine 21.

This sequence belongs to the sulfur carrier protein TusA family.

Its subcellular location is the cytoplasm. Its function is as follows. Sulfur carrier protein which probably makes part of a sulfur-relay system. The protein is Sulfur carrier protein TusA of Pseudomonas savastanoi pv. phaseolicola (strain 1448A / Race 6) (Pseudomonas syringae pv. phaseolicola (strain 1448A / Race 6)).